Consider the following 71-residue polypeptide: MIVDLESRVTDLETRLAFQDDTIQALNDVLVEQQRLVERLQLQLVALAKRQEEMQGSLGAADEDEAPPPHY.

Belongs to the SlyX family.

This is Protein SlyX homolog from Stutzerimonas stutzeri (strain A1501) (Pseudomonas stutzeri).